Here is a 483-residue protein sequence, read N- to C-terminus: Glutamate--tRNA ligase (483 aa).

Residues 11–21 (PSPTGHLHIGN) carry the 'HIGH' region motif. Positions 252–256 (KLSKR) match the 'KMSKS' region motif. Residue K255 participates in ATP binding.

This sequence belongs to the class-I aminoacyl-tRNA synthetase family. Glutamate--tRNA ligase type 1 subfamily. As to quaternary structure, monomer.

The protein localises to the cytoplasm. It carries out the reaction tRNA(Glu) + L-glutamate + ATP = L-glutamyl-tRNA(Glu) + AMP + diphosphate. Its function is as follows. Catalyzes the attachment of glutamate to tRNA(Glu) in a two-step reaction: glutamate is first activated by ATP to form Glu-AMP and then transferred to the acceptor end of tRNA(Glu). This is Glutamate--tRNA ligase from Bacillus velezensis (strain DSM 23117 / BGSC 10A6 / LMG 26770 / FZB42) (Bacillus amyloliquefaciens subsp. plantarum).